An 87-amino-acid polypeptide reads, in one-letter code: Guanine nucleotide-binding protein subunit gamma (87 aa).

Cys84 carries the post-translational modification Cysteine methyl ester. Cys84 carries the S-geranylgeranyl cysteine lipid modification. Positions 85 to 87 are cleaved as a propeptide — removed in mature form; sequence LLV.

The protein belongs to the G protein gamma family. G proteins are composed of 3 units, alpha, beta and gamma. Post-translationally, the N-terminus is blocked.

It localises to the cell membrane. Its function is as follows. Guanine nucleotide-binding proteins (G proteins) are involved as a modulator or transducer in various transmembrane signaling systems. This major G-protein of the squid photoreceptor is involved in visual transduction. The beta and gamma chains are required for the GTPase activity, for replacement of GDP by GTP, and for G protein-effector interaction. The chain is Guanine nucleotide-binding protein subunit gamma from Loligo forbesii (Veined squid).